The following is a 566-amino-acid chain: Repressible alkaline phosphatase (566 aa).

Residues 1 to 11 (MMTHTLPSEQT) are compositionally biased toward polar residues. Positions 1-27 (MMTHTLPSEQTRLVPGSDSSSRPKKRR) are disordered. Residues 1–33 (MMTHTLPSEQTRLVPGSDSSSRPKKRRISKRSK) lie on the Cytoplasmic side of the membrane. A helical membrane pass occupies residues 34 to 59 (IIVSTVVCIGLLLVLVQLAFPSSFAL). Residue Asp75 coordinates Mg(2+). Asp75 lines the Zn(2+) pocket. Ser123 functions as the Phosphoserine intermediate in the catalytic mechanism. A Phosphoserine modification is found at Ser123. The Mg(2+) site is built by Asp174 and Thr176. The N-linked (GlcNAc...) asparagine glycan is linked to Asn268. Position 325 (Glu325) interacts with Mg(2+). Zn(2+) is bound by residues Asp330, His334, Asp373, and His374. The N-linked (GlcNAc...) asparagine glycan is linked to Asn401. Residue His484 coordinates Zn(2+).

Belongs to the alkaline phosphatase family. The cofactor is Mg(2+). It depends on Zn(2+) as a cofactor.

It localises to the vacuole membrane. It is found in the cytoplasm. It catalyses the reaction a phosphate monoester + H2O = an alcohol + phosphate. The enzyme catalyses (2E,6E)-farnesyl diphosphate + H2O = (2E,6E)-farnesol + diphosphate. It carries out the reaction beta-D-fructose 2,6-bisphosphate + H2O = beta-D-fructose 2-phosphate + phosphate. Phosphatase with broad substrate specificity. A truncated (soluble) version of the protein is responsible for the production of (E,E)-farnesol from (E,E)-farnesyl diphosphate. Acts as a fructose-2,6-bisphosphate 6-phosphatase. The sequence is that of Repressible alkaline phosphatase (PHO8) from Saccharomyces cerevisiae (strain ATCC 204508 / S288c) (Baker's yeast).